A 297-amino-acid polypeptide reads, in one-letter code: 4-hydroxy-tetrahydrodipicolinate synthase (297 aa).

Thr-47 provides a ligand contact to pyruvate. Tyr-136 acts as the Proton donor/acceptor in catalysis. Lys-165 functions as the Schiff-base intermediate with substrate in the catalytic mechanism. Ile-206 is a pyruvate binding site.

The protein belongs to the DapA family. In terms of assembly, homotetramer; dimer of dimers.

The protein localises to the cytoplasm. It catalyses the reaction L-aspartate 4-semialdehyde + pyruvate = (2S,4S)-4-hydroxy-2,3,4,5-tetrahydrodipicolinate + H2O + H(+). The protein operates within amino-acid biosynthesis; L-lysine biosynthesis via DAP pathway; (S)-tetrahydrodipicolinate from L-aspartate: step 3/4. Functionally, catalyzes the condensation of (S)-aspartate-beta-semialdehyde [(S)-ASA] and pyruvate to 4-hydroxy-tetrahydrodipicolinate (HTPA). This Campylobacter fetus subsp. fetus (strain 82-40) protein is 4-hydroxy-tetrahydrodipicolinate synthase.